The sequence spans 65 residues: Large ribosomal subunit protein bL35 (65 aa).

Belongs to the bacterial ribosomal protein bL35 family.

The chain is Large ribosomal subunit protein bL35 from Baumannia cicadellinicola subsp. Homalodisca coagulata.